Reading from the N-terminus, the 287-residue chain is Pantothenate synthetase (287 aa).

ATP is bound at residue 30–37; sequence MGALHEGH. His37 acts as the Proton donor in catalysis. Residue Gln61 coordinates (R)-pantoate. Gln61 lines the beta-alanine pocket. 147 to 150 is an ATP binding site; that stretch reads GEKD. Gln153 is a binding site for (R)-pantoate. 184 to 187 is an ATP binding site; the sequence is MSSR.

The protein belongs to the pantothenate synthetase family. In terms of assembly, homodimer.

It is found in the cytoplasm. The catalysed reaction is (R)-pantoate + beta-alanine + ATP = (R)-pantothenate + AMP + diphosphate + H(+). It functions in the pathway cofactor biosynthesis; (R)-pantothenate biosynthesis; (R)-pantothenate from (R)-pantoate and beta-alanine: step 1/1. Its function is as follows. Catalyzes the condensation of pantoate with beta-alanine in an ATP-dependent reaction via a pantoyl-adenylate intermediate. The polypeptide is Pantothenate synthetase (Granulibacter bethesdensis (strain ATCC BAA-1260 / CGDNIH1)).